A 189-amino-acid chain; its full sequence is uncharacterized protein (189 aa).

The span at 1-15 (MDKHGVKTPLWRKEV) shows a compositional bias: basic and acidic residues. Positions 1 to 77 (MDKHGVKTPL…SPLRQESSSQ (77 aa)) are disordered. Composition is skewed to acidic residues over residues 16-29 (EDPE…EDDS) and 46-56 (SATETEEDSRD). Positions 65 to 77 (VSYSPLRQESSSQ) are enriched in polar residues.

This is an uncharacterized protein from Mus musculus (Mouse).